Reading from the N-terminus, the 322-residue chain is Methionyl-tRNA formyltransferase (322 aa).

Position 113–116 (serine 113–proline 116) interacts with (6S)-5,6,7,8-tetrahydrofolate.

The protein belongs to the Fmt family.

The catalysed reaction is L-methionyl-tRNA(fMet) + (6R)-10-formyltetrahydrofolate = N-formyl-L-methionyl-tRNA(fMet) + (6S)-5,6,7,8-tetrahydrofolate + H(+). Functionally, attaches a formyl group to the free amino group of methionyl-tRNA(fMet). The formyl group appears to play a dual role in the initiator identity of N-formylmethionyl-tRNA by promoting its recognition by IF2 and preventing the misappropriation of this tRNA by the elongation apparatus. The sequence is that of Methionyl-tRNA formyltransferase from Bacteroides thetaiotaomicron (strain ATCC 29148 / DSM 2079 / JCM 5827 / CCUG 10774 / NCTC 10582 / VPI-5482 / E50).